A 537-amino-acid chain; its full sequence is Exoglucanase 1 (537 aa).

The N-terminal stretch at 1 to 18 (MKGSISYQIYKGALLLSA) is a signal peptide. Residues 19-453 (LLNSVSAQQV…YVIYSNIKTG (435 aa)) form a catalytic region. Asn-136 carries an N-linked (GlcNAc...) asparagine glycan. The active-site Nucleophile is the Glu-235. The Proton donor role is filled by Glu-240. N-linked (GlcNAc...) asparagine glycans are attached at residues Asn-414 and Asn-456. Residues 454–477 (PLNSTFTGGTTSSSSTTTTTSKST) form a linker region. A compositionally biased stretch (low complexity) spans 458 to 502 (TFTGGTTSSSSTTTTTSKSTSTSSSSKTTTTVTTTTTSSGSSGTG). The segment at 458–503 (TFTGGTTSSSSTTTTTSKSTSTSSSSKTTTTVTTTTTSSGSSGTGA) is disordered. Positions 501–537 (TGARDWAQCGGNGWTGPTTCVSPYTCTKQNDWYSQCL) constitute a CBM1 domain. 2 disulfide bridges follow: Cys-509–Cys-526 and Cys-520–Cys-536.

It belongs to the glycosyl hydrolase 7 (cellulase C) family.

The protein resides in the secreted. It catalyses the reaction Hydrolysis of (1-&gt;4)-beta-D-glucosidic linkages in cellulose and cellotetraose, releasing cellobiose from the non-reducing ends of the chains.. This is Exoglucanase 1 (cbh1) from Penicillium janthinellum (Penicillium vitale).